We begin with the raw amino-acid sequence, 224 residues long: Ribonuclease T (224 aa).

An Exonuclease domain is found at 20-194; it reads VVIDVETAGF…YDTERTAELF (175 aa). The Mg(2+) site is built by Asp-23, Glu-25, His-181, and Asp-186. His-181 acts as the Proton donor/acceptor in catalysis.

This sequence belongs to the RNase T family. As to quaternary structure, homodimer. Requires Mg(2+) as cofactor.

Its function is as follows. Trims short 3' overhangs of a variety of RNA species, leaving a one or two nucleotide 3' overhang. Responsible for the end-turnover of tRNA: specifically removes the terminal AMP residue from uncharged tRNA (tRNA-C-C-A). Also appears to be involved in tRNA biosynthesis. This is Ribonuclease T from Enterobacter sp. (strain 638).